The sequence spans 245 residues: MSGKVWLVGAGPGDPELLTLKAVRALQDADVVMVDDLVNPSILEHCPSARLVRVGKRGGCRSTPQDFIQRLMLRHARQGRSVVRLKGGDPCIFGRAGEEAEWLARHGIDSEIVNGITAGLAGATACGIPLTYRGISRGVTLVTAHTQDDSPLAWEALARSGTTLVVYMGVARLAEIQAGLLAGGMAEDTPLAMIENATLGNQRECRSNLGELLRDAGRFALKSPAILVIGEVTRDIVSQPISLSA.

S-adenosyl-L-homocysteine is bound by residues Pro-12, 87–89 (GGD), 117–118 (TA), Met-168, Ala-197, and Ala-225.

The protein belongs to the precorrin methyltransferase family.

The enzyme catalyses uroporphyrinogen III + 2 S-adenosyl-L-methionine = precorrin-2 + 2 S-adenosyl-L-homocysteine + H(+). It participates in cofactor biosynthesis; adenosylcobalamin biosynthesis; precorrin-2 from uroporphyrinogen III: step 1/1. Its pathway is porphyrin-containing compound metabolism; siroheme biosynthesis; precorrin-2 from uroporphyrinogen III: step 1/1. Catalyzes the two successive C-2 and C-7 methylation reactions involved in the conversion of uroporphyrinogen III to precorrin-2 via the intermediate formation of precorrin-1. It is a step in the biosynthesis of both cobalamin (vitamin B12) and siroheme. This Pseudomonas aeruginosa (strain ATCC 15692 / DSM 22644 / CIP 104116 / JCM 14847 / LMG 12228 / 1C / PRS 101 / PAO1) protein is Uroporphyrinogen-III C-methyltransferase (cobA).